The sequence spans 142 residues: MFQGASSLNLDAKGRMTIPARHRDALLLQCEGRITLTKHPDGCLLLFPRPVWEMRREEIAKWPISARAWQRIFLGNASDVDFDGAGRILIAPELRTAAGLTRDVMMMGMGGHFEIWDAARLAESESDAIAAGMPDVLNDFSF.

2 SpoVT-AbrB domains span residues 5 to 51 (ASSL…PRPV) and 77 to 120 (ASDV…DAAR).

It belongs to the MraZ family. Forms oligomers.

It is found in the cytoplasm. The protein localises to the nucleoid. The protein is Transcriptional regulator MraZ of Herminiimonas arsenicoxydans.